We begin with the raw amino-acid sequence, 133 residues long: S-protein homolog 9 (133 aa).

The N-terminal stretch at 1–20 (MNRLSCFLLVIGLCIGLSNA) is a signal peptide.

Belongs to the plant self-incompatibility (S1) protein family.

It is found in the secreted. In Arabidopsis thaliana (Mouse-ear cress), this protein is S-protein homolog 9.